Here is a 160-residue protein sequence, read N- to C-terminus: Ribosomal RNA large subunit methyltransferase H (160 aa).

Residues leucine 76, glycine 108, and 127–132 (LGKMTW) each bind S-adenosyl-L-methionine.

Belongs to the RNA methyltransferase RlmH family. In terms of assembly, homodimer.

Its subcellular location is the cytoplasm. The catalysed reaction is pseudouridine(1915) in 23S rRNA + S-adenosyl-L-methionine = N(3)-methylpseudouridine(1915) in 23S rRNA + S-adenosyl-L-homocysteine + H(+). In terms of biological role, specifically methylates the pseudouridine at position 1915 (m3Psi1915) in 23S rRNA. The chain is Ribosomal RNA large subunit methyltransferase H from Sinorhizobium fredii (strain NBRC 101917 / NGR234).